Reading from the N-terminus, the 113-residue chain is Large ribosomal subunit protein bL19 (113 aa).

This sequence belongs to the bacterial ribosomal protein bL19 family.

This protein is located at the 30S-50S ribosomal subunit interface and may play a role in the structure and function of the aminoacyl-tRNA binding site. The chain is Large ribosomal subunit protein bL19 from Corynebacterium jeikeium (strain K411).